A 427-amino-acid chain; its full sequence is Serine--tRNA ligase (427 aa).

An L-serine-binding site is contributed by 232–234; sequence TAE. 263-265 is an ATP binding site; the sequence is RSE. Glu-286 is a binding site for L-serine. 350 to 353 serves as a coordination point for ATP; the sequence is EISS. Ser-385 is a binding site for L-serine.

This sequence belongs to the class-II aminoacyl-tRNA synthetase family. Type-1 seryl-tRNA synthetase subfamily. As to quaternary structure, homodimer. The tRNA molecule binds across the dimer.

The protein resides in the cytoplasm. It carries out the reaction tRNA(Ser) + L-serine + ATP = L-seryl-tRNA(Ser) + AMP + diphosphate + H(+). It catalyses the reaction tRNA(Sec) + L-serine + ATP = L-seryl-tRNA(Sec) + AMP + diphosphate + H(+). It functions in the pathway aminoacyl-tRNA biosynthesis; selenocysteinyl-tRNA(Sec) biosynthesis; L-seryl-tRNA(Sec) from L-serine and tRNA(Sec): step 1/1. Its function is as follows. Catalyzes the attachment of serine to tRNA(Ser). Is also able to aminoacylate tRNA(Sec) with serine, to form the misacylated tRNA L-seryl-tRNA(Sec), which will be further converted into selenocysteinyl-tRNA(Sec). The chain is Serine--tRNA ligase from Lacticaseibacillus casei (strain BL23) (Lactobacillus casei).